Here is a 263-residue protein sequence, read N- to C-terminus: uncharacterized protein (263 aa).

The signal sequence occupies residues 1–22 (MRYLKRVVLYRIVMVLSVFIIG). A lipid anchor (N-palmitoyl cysteine) is attached at cysteine 23. Residue cysteine 23 is the site of S-diacylglycerol cysteine attachment.

Belongs to the staphylococcal tandem lipoprotein family.

The protein localises to the cell membrane. This is an uncharacterized protein from Staphylococcus aureus (strain bovine RF122 / ET3-1).